A 327-amino-acid chain; its full sequence is Flotillin-like protein FloA (327 aa).

Helical transmembrane passes span 6-26 and 28-48; these read VLFF…FTFV and IMLW…TLVG.

The protein belongs to the flotillin-like FloA family. As to quaternary structure, homooligomerizes.

Its subcellular location is the cell membrane. It is found in the membrane raft. Functionally, found in functional membrane microdomains (FMM) that may be equivalent to eukaryotic membrane rafts. FMMs are highly dynamic and increase in number as cells age. Flotillins are thought to be important factors in membrane fluidity. The sequence is that of Flotillin-like protein FloA from Priestia megaterium (strain DSM 319 / IMG 1521) (Bacillus megaterium).